A 154-amino-acid polypeptide reads, in one-letter code: MSRLHAHKRYHGQSGSKRPLRTTKPEWAPYDKEFVENKIIELAKQGYSPAMIGLILRDQYGIPDVRLYIGKSLQDFLEEKGLLPDIPWDLIYLLKRAYRVYKHIELNPRDTQAKRNYQLIISKIHRLAKYYKRKGVLPKDWKYSIEIARLYAVQ.

Over residues Met-1–His-11 the composition is skewed to basic residues. Residues Met-1 to Lys-24 form a disordered region.

It belongs to the universal ribosomal protein uS15 family. Part of the 30S ribosomal subunit.

The protein is Small ribosomal subunit protein uS15 of Nanoarchaeum equitans (strain Kin4-M).